The primary structure comprises 297 residues: Phosphatidylserine decarboxylase proenzyme (297 aa).

Residues D100, H157, and S263 each act as charge relay system; for autoendoproteolytic cleavage activity in the active site. The Schiff-base intermediate with substrate; via pyruvic acid; for decarboxylase activity role is filled by S263. Pyruvic acid (Ser); by autocatalysis is present on S263.

It belongs to the phosphatidylserine decarboxylase family. PSD-B subfamily. Prokaryotic type I sub-subfamily. In terms of assembly, heterodimer of a large membrane-associated beta subunit and a small pyruvoyl-containing alpha subunit. It depends on pyruvate as a cofactor. In terms of processing, is synthesized initially as an inactive proenzyme. Formation of the active enzyme involves a self-maturation process in which the active site pyruvoyl group is generated from an internal serine residue via an autocatalytic post-translational modification. Two non-identical subunits are generated from the proenzyme in this reaction, and the pyruvate is formed at the N-terminus of the alpha chain, which is derived from the carboxyl end of the proenzyme. The autoendoproteolytic cleavage occurs by a canonical serine protease mechanism, in which the side chain hydroxyl group of the serine supplies its oxygen atom to form the C-terminus of the beta chain, while the remainder of the serine residue undergoes an oxidative deamination to produce ammonia and the pyruvoyl prosthetic group on the alpha chain. During this reaction, the Ser that is part of the protease active site of the proenzyme becomes the pyruvoyl prosthetic group, which constitutes an essential element of the active site of the mature decarboxylase.

It is found in the cell membrane. It carries out the reaction a 1,2-diacyl-sn-glycero-3-phospho-L-serine + H(+) = a 1,2-diacyl-sn-glycero-3-phosphoethanolamine + CO2. It functions in the pathway phospholipid metabolism; phosphatidylethanolamine biosynthesis; phosphatidylethanolamine from CDP-diacylglycerol: step 2/2. Catalyzes the formation of phosphatidylethanolamine (PtdEtn) from phosphatidylserine (PtdSer). The chain is Phosphatidylserine decarboxylase proenzyme from Haemophilus ducreyi (strain 35000HP / ATCC 700724).